Consider the following 105-residue polypeptide: Small ribosomal subunit protein uS10 (105 aa).

This sequence belongs to the universal ribosomal protein uS10 family. In terms of assembly, part of the 30S ribosomal subunit.

Involved in the binding of tRNA to the ribosomes. In Crocosphaera subtropica (strain ATCC 51142 / BH68) (Cyanothece sp. (strain ATCC 51142)), this protein is Small ribosomal subunit protein uS10.